The following is a 60-amino-acid chain: Large ribosomal subunit protein bL32 (60 aa).

It belongs to the bacterial ribosomal protein bL32 family.

The sequence is that of Large ribosomal subunit protein bL32 from Pediococcus pentosaceus (strain ATCC 25745 / CCUG 21536 / LMG 10740 / 183-1w).